Here is a 122-residue protein sequence, read N- to C-terminus: MIQPQTHLNVADNSGARKLMCIRILGASNRRYAYIGDIVVAVIKQAVPNTNLERSEVIRAVIVRTCKQLKRSNGIIIQYDDNAAVVIDQEGNPKGTRIFCAIARELRQLNFTKIVSLAPEVL.

This sequence belongs to the universal ribosomal protein uL14 family. In terms of assembly, part of the 50S ribosomal subunit.

The protein localises to the plastid. It is found in the chloroplast. Functionally, binds to 23S rRNA. The sequence is that of Large ribosomal subunit protein uL14c from Phaseolus vulgaris (Kidney bean).